Consider the following 488-residue polypeptide: Malonate-semialdehyde dehydrogenase 2 (488 aa).

NAD(+) contacts are provided by Phe-155, Lys-179, Glu-182, Arg-183, and Ser-232. Cys-287 (nucleophile) is an active-site residue. Glu-387 provides a ligand contact to NAD(+).

The protein belongs to the aldehyde dehydrogenase family. IolA subfamily. Homotetramer.

The enzyme catalyses 3-oxopropanoate + NAD(+) + CoA + H2O = hydrogencarbonate + acetyl-CoA + NADH + H(+). The catalysed reaction is 2-methyl-3-oxopropanoate + NAD(+) + CoA + H2O = propanoyl-CoA + hydrogencarbonate + NADH + H(+). Its pathway is polyol metabolism; myo-inositol degradation into acetyl-CoA; acetyl-CoA from myo-inositol: step 7/7. Catalyzes the oxidation of malonate semialdehyde (MSA) and methylmalonate semialdehyde (MMSA) into acetyl-CoA and propanoyl-CoA, respectively. Is involved in a myo-inositol catabolic pathway. Bicarbonate, and not CO2, is the end-product of the enzymatic reaction. This chain is Malonate-semialdehyde dehydrogenase 2, found in Bacillus cereus (strain ZK / E33L).